Consider the following 804-residue polypeptide: Zinc finger protein 541 (804 aa).

Disordered regions lie at residues 21 to 120 and 133 to 197; these read SKAS…NPDI and TLDL…GNPR. Residues 285–307 form a C2H2-type 1 zinc finger; that stretch reads FICKNCSQMFYTEKGLSSHMCFH. The tract at residues 379–426 is disordered; it reads MEQEKDGEERDSKESSQQRKRKKRPPPKRLFIPPPPSTAGEPGPAGCH. Over residues 380 to 395 the composition is skewed to basic and acidic residues; sequence EQEKDGEERDSKESSQ. The segment covering 396-405 has biased composition (basic residues); sequence QRKRKKRPPP. The ELM2 domain occupies 509–601; that stretch reads PHINIGSRFQ…VALETLLLRG (93 aa). Positions 616-667 constitute an SANT domain; sequence TGSDVWTPIEKRLFKKAFYAHKKDFYLIHKTIQTKTVAQCVEYYYIWKKMIK. The interval 680–743 is disordered; sequence VKREPEEVER…TPEPSGSVES (64 aa). A compositionally biased stretch (basic and acidic residues) spans 690–721; sequence TEEKVPCSPRERPSHHPIPELKIKTKSYRRES. The C2H2-type 2 zinc-finger motif lies at 747 to 769; sequence FPCRECERVFDKIKSRNAHMKRH.

Interacts with DNTTIP1. Identified in a complex with KCDT19, HDAC1 and HSPA2s. Component of a histone deacetylase complex containing DNTTIP1, ZNF541, HDAC1 and HDAC2. Identified in a complex with HDAC1, HDAC2, DNTTIP1 and KCTD19.

It localises to the nucleus. Transcription regulator which is essential for male fertility and for the completion of meiotic prophase in spermatocytes. Regulates progression of the pachytene stage of meiotic prophase by activating the expression of genes involved in meiosis and post-meiosis during spermatogenesis. Maintains the repression of pre-pachytene transcriptional programs, including meiotic double-strand breaks (DSB) formation genes in pachytene spermatocytes and suppresses aberrant DSB formation after mid-pachytene, thus ensuring meiosis progression. This Macaca fascicularis (Crab-eating macaque) protein is Zinc finger protein 541 (ZNF541).